The sequence spans 263 residues: MFRNQYDNDVTVWSPQGRIHQIEYAMEAVKQGSATVGLKSKTHAVLVALKRAQSELAAHQKKILHVDNHIGISIAGLTADARLLCNFMRQECLDSRFVFDRPLPVSRLVSLIGSKTQIPTQRYGRRPYGVGLLIAGYDDMGPHIFQTCPSANYFDCRAMSIGARSQSARTYLERHMSEFMECNLNELVKHGLRALRETLPAEQDLTTKNVSIGIVGKDLEFTIYDDDDVSPFLEGLEERPQRKAQPTQPADEPAEKADEPMEH.

N-acetylmethionine is present on methionine 1. Position 110 is a phosphoserine; alternate (serine 110). An O-linked (GlcNAc) serine; alternate glycan is attached at serine 110. A Glycyl lysine isopeptide (Lys-Gly) (interchain with G-Cter in ubiquitin) cross-link involves residue lysine 115. At serine 177 the chain carries Phosphoserine. Residue lysine 208 forms a Glycyl lysine isopeptide (Lys-Gly) (interchain with G-Cter in ubiquitin) linkage. The interval 232-263 (FLEGLEERPQRKAQPTQPADEPAEKADEPMEH) is disordered. Residues 253–263 (PAEKADEPMEH) are compositionally biased toward basic and acidic residues.

It belongs to the peptidase T1A family. As to quaternary structure, the 26S proteasome consists of a 20S proteasome core and two 19S regulatory subunits. The 20S proteasome core is a barrel-shaped complex made of 28 subunits that are arranged in four stacked rings. The two outer rings are each formed by seven alpha subunits, and the two inner rings are formed by seven beta subunits. The proteolytic activity is exerted by three beta-subunits PSMB5, PSMB6 and PSMB7. Interacts with NOTCH3. Interacts with ZFAND1.

It is found in the cytoplasm. The protein resides in the nucleus. Functionally, component of the 20S core proteasome complex involved in the proteolytic degradation of most intracellular proteins. This complex plays numerous essential roles within the cell by associating with different regulatory particles. Associated with two 19S regulatory particles, forms the 26S proteasome and thus participates in the ATP-dependent degradation of ubiquitinated proteins. The 26S proteasome plays a key role in the maintenance of protein homeostasis by removing misfolded or damaged proteins that could impair cellular functions, and by removing proteins whose functions are no longer required. Associated with the PA200 or PA28, the 20S proteasome mediates ubiquitin-independent protein degradation. This type of proteolysis is required in several pathways including spermatogenesis (20S-PA200 complex) or generation of a subset of MHC class I-presented antigenic peptides (20S-PA28 complex). The polypeptide is Proteasome subunit alpha type-1 (PSMA1) (Bos taurus (Bovine)).